The following is a 423-amino-acid chain: Mannitol-1-phosphate 5-dehydrogenase (423 aa).

Positions 40, 69, and 70 each coordinate Zn(2+).

It belongs to the zinc-containing alcohol dehydrogenase family. Zn(2+) is required as a cofactor.

It carries out the reaction D-mannitol 1-phosphate + NAD(+) = beta-D-fructose 6-phosphate + NADH + H(+). In terms of biological role, seems to be involved in mannitol utilization. Complements an E.coli mtlD deletion mutant. This Aliivibrio fischeri (strain ATCC 700601 / ES114) (Vibrio fischeri) protein is Mannitol-1-phosphate 5-dehydrogenase.